A 447-amino-acid chain; its full sequence is Asparagine--tRNA ligase (447 aa).

This sequence belongs to the class-II aminoacyl-tRNA synthetase family. Homodimer.

It localises to the cytoplasm. The catalysed reaction is tRNA(Asn) + L-asparagine + ATP = L-asparaginyl-tRNA(Asn) + AMP + diphosphate + H(+). This is Asparagine--tRNA ligase from Mycoplasma mobile (strain ATCC 43663 / 163K / NCTC 11711) (Mesomycoplasma mobile).